A 219-amino-acid polypeptide reads, in one-letter code: Adenylate kinase (219 aa).

Gly10–Thr15 contributes to the ATP binding site. The NMP stretch occupies residues Ser30–Val59. Residues Thr31, Arg36, Glu57–Val59, Gly85–Arg88, and Gln92 contribute to the AMP site. Residues Gly122–Asp159 are LID. ATP-binding positions include Arg123 and Val132–Tyr133. The segment at Ser129–Pro152 is disordered. Over residues Tyr133–Pro152 the composition is skewed to basic and acidic residues. Residues Arg156 and Arg167 each coordinate AMP. Gly203 provides a ligand contact to ATP.

It belongs to the adenylate kinase family. In terms of assembly, monomer.

The protein localises to the cytoplasm. The enzyme catalyses AMP + ATP = 2 ADP. It functions in the pathway purine metabolism; AMP biosynthesis via salvage pathway; AMP from ADP: step 1/1. In terms of biological role, catalyzes the reversible transfer of the terminal phosphate group between ATP and AMP. Plays an important role in cellular energy homeostasis and in adenine nucleotide metabolism. This chain is Adenylate kinase, found in Alkalilimnicola ehrlichii (strain ATCC BAA-1101 / DSM 17681 / MLHE-1).